We begin with the raw amino-acid sequence, 188 residues long: Putative manganese efflux pump MntP (188 aa).

A run of 6 helical transmembrane segments spans residues 3-23 (FYALLLIALGMSMDAFAVALA), 35-55 (IAATALVFGTVEALTPLAGWV), 63-83 (FISEWDHWVAFVLLGGLGLKM), 104-126 (WMTVLTAFGTSIDSMIVGVGLAF), 140-160 (MATTVMVAVGLTAGRALGVLF), and 167-187 (AGGLVLIAIGTWTLLSHLGLI).

The protein belongs to the MntP (TC 9.B.29) family.

The protein localises to the cell inner membrane. Functionally, probably functions as a manganese efflux pump. The sequence is that of Putative manganese efflux pump MntP from Neisseria meningitidis serogroup B (strain ATCC BAA-335 / MC58).